The chain runs to 1083 residues: Voltage-gated inwardly rectifying potassium channel KCNH3 (1083 aa).

Residues Met-1 to Asp-228 lie on the Cytoplasmic side of the membrane. Residues Ile-18–His-90 enclose the PAS domain. A PAC domain is found at Phe-93–Trp-145. Positions Lys-137–Gly-150 are enriched in basic and acidic residues. Positions Lys-137–Arg-157 are disordered. Residues Gly-229–Ser-249 form a helical membrane-spanning segment. The Extracellular portion of the chain corresponds to Thr-250–Gly-259. The helical transmembrane segment at Pro-260–Phe-280 threads the bilayer. At Arg-281 to Tyr-302 the chain is on the cytoplasmic side. A helical membrane pass occupies residues Val-303–Phe-323. At Lys-324 to Ala-331 the chain is on the extracellular side. Residues His-332–Tyr-352 form a helical; Voltage-sensor membrane-spanning segment. Residues Ser-353–Thr-361 are Cytoplasmic-facing. A helical membrane pass occupies residues Leu-362–Gly-382. Topologically, residues Gln-383 to Ile-453 are extracellular. 3 N-linked (GlcNAc...) asparagine glycosylation sites follow: Asn-421, Asn-428, and Asn-436. The segment at residues Thr-454–Asn-474 is an intramembrane region (pore-forming). The Selectivity filter motif lies at Ser-465–Asn-470. Over Thr-475–Lys-479 the chain is Extracellular. The chain crosses the membrane as a helical span at residues Ile-480 to Val-500. Over Thr-501–Val-1083 the chain is Cytoplasmic. Leu-582–Arg-697 contributes to the a nucleoside 3',5'-cyclic phosphate binding site. 3 disordered regions span residues Glu-729–Pro-810, Cys-832–Arg-873, and Met-972–Trp-1055. Over residues Thr-773 to Pro-785 the composition is skewed to basic residues. Residues Gly-844–Gly-861 show a composition bias toward low complexity.

It belongs to the potassium channel family. H (Eag) (TC 1.A.1.20) subfamily. Kv12.2/KCNH3 sub-subfamily. The potassium channel is probably composed of a homo- or heterotetrameric complex of pore-forming alpha subunits that can associate with modulating beta subunits. Interacts with KCNE1 and KCNE3; these interactions regulate KCNH3 trafficking to the plasma membrane and its subsequent voltage-gated potassium channel activity. N-glycosylated. N-glycosylation mediates traffick to the cell membrane but is not necessary for voltage-gated potassium channel activity. Detected only in brain, in particular in the telencephalon. Detected in the cerebral cortex, occipital pole, frontal and temporal lobe, putamen, amygdala, hippocampus and caudate nucleus.

The protein localises to the cell membrane. The enzyme catalyses K(+)(in) = K(+)(out). Functionally, pore-forming (alpha) subunit of a voltage-gated inwardly rectifying potassium channel. Charactherized by a fast rate of activation during depolarization followed by a rapid inactivation at much more depolarized value causing inward rectification due to a C-type inactivation mechanism. Exhibits a rapid recovery from inactivation. This is Voltage-gated inwardly rectifying potassium channel KCNH3 from Homo sapiens (Human).